Consider the following 152-residue polypeptide: Transcriptional regulator MraZ (152 aa).

SpoVT-AbrB domains are found at residues 5 to 52 and 81 to 124; these read ATLV…PLPE and ASEC…DEQT.

The protein belongs to the MraZ family. Forms oligomers.

It is found in the cytoplasm. The protein localises to the nucleoid. Its function is as follows. Negatively regulates its own expression and that of the subsequent genes in the proximal part of the division and cell wall (dcw) gene cluster. Acts by binding directly to DNA. May also regulate the expression of genes outside the dcw cluster. In Erwinia tasmaniensis (strain DSM 17950 / CFBP 7177 / CIP 109463 / NCPPB 4357 / Et1/99), this protein is Transcriptional regulator MraZ.